Here is a 174-residue protein sequence, read N- to C-terminus: Adipose-secreted signaling protein (174 aa).

Alanine 2 is subject to N-acetylalanine. A Phosphothreonine modification is found at threonine 147.

Belongs to the ADISSP family.

The protein localises to the secreted. Functionally, adipocyte-secreted protein (adipokine) that acts as a key regulator for white adipose tissue (WAT) thermogenesis and glucose homeostasis at least in part through activation of protein kinase A (PKA). This is Adipose-secreted signaling protein from Homo sapiens (Human).